Here is a 350-residue protein sequence, read N- to C-terminus: Histidinol-phosphate aminotransferase (350 aa).

Lys207 carries the N6-(pyridoxal phosphate)lysine modification.

Belongs to the class-II pyridoxal-phosphate-dependent aminotransferase family. Histidinol-phosphate aminotransferase subfamily. In terms of assembly, homodimer. Pyridoxal 5'-phosphate serves as cofactor.

The catalysed reaction is L-histidinol phosphate + 2-oxoglutarate = 3-(imidazol-4-yl)-2-oxopropyl phosphate + L-glutamate. It functions in the pathway amino-acid biosynthesis; L-histidine biosynthesis; L-histidine from 5-phospho-alpha-D-ribose 1-diphosphate: step 7/9. This Streptococcus thermophilus (strain ATCC BAA-491 / LMD-9) protein is Histidinol-phosphate aminotransferase.